The chain runs to 127 residues: Fumarate reductase subunit C (127 aa).

A run of 3 helical transmembrane segments spans residues 30–50, 67–87, and 107–127; these read ATILPLIFFTICLTFGLGCLV, IVVVLNILALLGSLFHAQTFF, and IIVLAQWAAVAAISLFVLVLV.

Belongs to the FrdC family. Part of an enzyme complex containing four subunits: a flavoprotein (FrdA), an iron-sulfur protein (FrdB), and two hydrophobic anchor proteins (FrdC and FrdD).

The protein resides in the cell inner membrane. In terms of biological role, anchors the catalytic components of the fumarate reductase complex to the cell membrane, binds quinones. The polypeptide is Fumarate reductase subunit C (Photobacterium profundum (strain SS9)).